A 548-amino-acid chain; its full sequence is Chaperonin GroEL (548 aa).

Residues 30–33, K51, 87–91, G415, 479–481, and D495 contribute to the ATP site; these read TLGP, DGTTT, and NAA.

Belongs to the chaperonin (HSP60) family. In terms of assembly, forms a cylinder of 14 subunits composed of two heptameric rings stacked back-to-back. Interacts with the co-chaperonin GroES.

It is found in the cytoplasm. It catalyses the reaction ATP + H2O + a folded polypeptide = ADP + phosphate + an unfolded polypeptide.. Together with its co-chaperonin GroES, plays an essential role in assisting protein folding. The GroEL-GroES system forms a nano-cage that allows encapsulation of the non-native substrate proteins and provides a physical environment optimized to promote and accelerate protein folding. This chain is Chaperonin GroEL, found in Salmonella arizonae (strain ATCC BAA-731 / CDC346-86 / RSK2980).